A 105-amino-acid polypeptide reads, in one-letter code: Heat shock protein HspQ (105 aa).

This sequence belongs to the HspQ family.

The protein resides in the cytoplasm. In terms of biological role, involved in the degradation of certain denaturated proteins, including DnaA, during heat shock stress. In Blochmanniella pennsylvanica (strain BPEN), this protein is Heat shock protein HspQ.